The primary structure comprises 515 residues: Methionine--tRNA ligase (515 aa).

The short motif at 13-23 (AYPNGKPHIGH) is the 'HIGH' region element. The short motif at 300-304 (KMSKS) is the 'KMSKS' region element. Lys303 provides a ligand contact to ATP.

This sequence belongs to the class-I aminoacyl-tRNA synthetase family. MetG type 2B subfamily. In terms of assembly, monomer.

The protein resides in the cytoplasm. It catalyses the reaction tRNA(Met) + L-methionine + ATP = L-methionyl-tRNA(Met) + AMP + diphosphate. Functionally, is required not only for elongation of protein synthesis but also for the initiation of all mRNA translation through initiator tRNA(fMet) aminoacylation. This is Methionine--tRNA ligase from Brucella melitensis biotype 1 (strain ATCC 23456 / CCUG 17765 / NCTC 10094 / 16M).